We begin with the raw amino-acid sequence, 255 residues long: tRNA (guanine-N(1)-)-methyltransferase (255 aa).

Residues Gly-117 and 137–142 (LGDFVL) each bind S-adenosyl-L-methionine.

It belongs to the RNA methyltransferase TrmD family. As to quaternary structure, homodimer.

The protein localises to the cytoplasm. It catalyses the reaction guanosine(37) in tRNA + S-adenosyl-L-methionine = N(1)-methylguanosine(37) in tRNA + S-adenosyl-L-homocysteine + H(+). Specifically methylates guanosine-37 in various tRNAs. The protein is tRNA (guanine-N(1)-)-methyltransferase of Paraburkholderia phytofirmans (strain DSM 17436 / LMG 22146 / PsJN) (Burkholderia phytofirmans).